We begin with the raw amino-acid sequence, 517 residues long: GMP synthase [glutamine-hydrolyzing] (517 aa).

The region spanning 9–199 is the Glutamine amidotransferase type-1 domain; it reads RILILDFGSQ…VLGICGCERL (191 aa). C86 acts as the Nucleophile in catalysis. Catalysis depends on residues H173 and E175. One can recognise a GMPS ATP-PPase domain in the interval 200 to 392; sequence WTSESIIEDA…LGLPYEMLYR (193 aa). 227–233 contacts ATP; it reads SGGVDSS.

As to quaternary structure, homodimer.

It carries out the reaction XMP + L-glutamine + ATP + H2O = GMP + L-glutamate + AMP + diphosphate + 2 H(+). The protein operates within purine metabolism; GMP biosynthesis; GMP from XMP (L-Gln route): step 1/1. Catalyzes the synthesis of GMP from XMP. The sequence is that of GMP synthase [glutamine-hydrolyzing] from Vibrio vulnificus (strain CMCP6).